Consider the following 435-residue polypeptide: MKKTHITEQKFADLGLNPQVVEGLEKKGFEFCTPIQALALPVLLSGQDIAGQAQTGTGKTLAFLTATFNHLLTTHAHEGRQPTQPRAIIMAPTRELAIQIYNDAEPLIASTGIKAALAYGGESYDKQLAKLQGGVDVLIGTTGRIIDFYKQRVFNLNNIQAVVLDEADRMFDLGFIKDIRFLFRRMPAPQERLNMLFSATLSYRVQELAFEHMHNPEHVVVEPEQKTGHRIQEELFYPSNEDKMALLQTLIEEEWPDRAIIFANTKYKCESIWAHLAADGHRVGLLTGDVPQKKREKILEQFTQGSVDLLVATDVAARGLHIPQVTHVFNYDLPDDCEDYVHRIGRTGRAGASGHSISFACEDYAINLPAIEEYIEHTIPVSDYDSSALIQDLPAPVRTPSARNQQRRTNTGGARSGDRKSNNRRPRQPRQHKEA.

A Q motif motif is present at residues 9-37; sequence QKFADLGLNPQVVEGLEKKGFEFCTPIQA. The Helicase ATP-binding domain maps to 40-219; the sequence is LPVLLSGQDI…FEHMHNPEHV (180 aa). 53–60 contributes to the ATP binding site; the sequence is AQTGTGKT. A DEAD box motif is present at residues 165–168; that stretch reads DEAD. The 146-residue stretch at 245–390 folds into the Helicase C-terminal domain; that stretch reads ALLQTLIEEE…VSDYDSSALI (146 aa). The tract at residues 395–435 is disordered; it reads APVRTPSARNQQRRTNTGGARSGDRKSNNRRPRQPRQHKEA. Polar residues predominate over residues 401 to 413; it reads SARNQQRRTNTGG. Residues 422–435 are compositionally biased toward basic residues; it reads NNRRPRQPRQHKEA.

This sequence belongs to the DEAD box helicase family. RhlB subfamily. In terms of assembly, component of the RNA degradosome, which is a multiprotein complex involved in RNA processing and mRNA degradation.

The protein resides in the cytoplasm. The enzyme catalyses ATP + H2O = ADP + phosphate + H(+). Functionally, DEAD-box RNA helicase involved in RNA degradation. Has RNA-dependent ATPase activity and unwinds double-stranded RNA. This chain is ATP-dependent RNA helicase RhlB, found in Vibrio vulnificus (strain YJ016).